We begin with the raw amino-acid sequence, 616 residues long: uncharacterized protein (616 aa).

Belongs to the UbiD family.

This is an uncharacterized protein from Helicobacter pylori (strain J99 / ATCC 700824) (Campylobacter pylori J99).